The primary structure comprises 291 residues: MTTLAIDIGGTKLAAALIDKNLRISQRRELPTPGSKTPGALREALTALVEPLRTEAHQVAIASTGIIQEGMLLALNPHNLGGLLHFPLVQTLETITGLPTLAVNDAQAAAWAEYHALPDDIRDMVFITVSTGVGGGVVCDGKLLTGKGGLAGHLGHTLADPHGPVCGCGRVGCVEAIASGRGMAAAARDDLAGCDAKTLFIRAGEGHQQARQLVRQSAQVVARLVADVKVTTDCQCVVIGGSVGLAEGYLEQVRAFLMQEPAPYHVALSAARYRHDAGLLGAALLAQGDTL.

Residues 5 to 12 (AIDIGGTK) and 132 to 139 (GVGGGVVC) each bind ATP. The Zn(2+) site is built by histidine 156, cysteine 166, cysteine 168, and cysteine 173.

Belongs to the ROK (NagC/XylR) family. NanK subfamily. Homodimer.

It carries out the reaction an N-acyl-D-mannosamine + ATP = an N-acyl-D-mannosamine 6-phosphate + ADP + H(+). Its pathway is amino-sugar metabolism; N-acetylneuraminate degradation; D-fructose 6-phosphate from N-acetylneuraminate: step 2/5. Functionally, catalyzes the phosphorylation of N-acetylmannosamine (ManNAc) to ManNAc-6-P. The chain is N-acetylmannosamine kinase from Salmonella arizonae (strain ATCC BAA-731 / CDC346-86 / RSK2980).